The chain runs to 299 residues: Serpentine receptor class gamma-30 (299 aa).

Transmembrane regions (helical) follow at residues 18–38 (GIQF…IKVL), 59–79 (ILSV…NYIP), 98–118 (ILFI…FMVV), 137–157 (IIPH…WTAF), 189–209 (IISS…MLCI), 223–243 (LTAS…MNIY), and 260–280 (ALTA…MLCL).

The protein belongs to the nematode receptor-like protein srg family.

It is found in the membrane. The sequence is that of Serpentine receptor class gamma-30 (srg-30) from Caenorhabditis elegans.